Reading from the N-terminus, the 353-residue chain is Pleckstrin-2 (353 aa).

Met1 is modified (N-acetylmethionine). Positions 4-104 constitute a PH 1 domain; sequence GVLKEGFLVK…WAFEITGAIH (101 aa). Residue Ser120 is modified to Phosphoserine. Residues 139–225 form the DEP domain; it reads SNTGIRSSPN…DSTALYTFAE (87 aa). The 107-residue stretch at 247–353 folds into the PH 2 domain; the sequence is TVVKQGYLAK…EWIEAIKKLT (107 aa).

The protein localises to the cell projection. It is found in the lamellipodium membrane. The protein resides in the cytoplasm. It localises to the cytoskeleton. Functionally, may help orchestrate cytoskeletal arrangement. Contribute to lamellipodia formation. The sequence is that of Pleckstrin-2 (PLEK2) from Homo sapiens (Human).